Here is a 242-residue protein sequence, read N- to C-terminus: MRDNSTFIQGLRSLGMDLNKHQLEQFEIYYDLLIEWNSFMNLTAITEYEEVIQKHFLDSLSLIKSYQIKTGDTLLDMGTGAGFPGIPLKIAYPDLNVLLMDSLNKRINFLNEVINRLELKNISAMHGRAEEQARKLDFREKFDIVVSRAVARTASLAELCLPYVKKGGYFIPYKSGKVTEELEEAEYALECLGGKLEEKVTFSLPDTDMERTLICIKKVKETPKSYPRAGGKPLKMPLIRKK.

S-adenosyl-L-methionine is bound by residues Gly-78, Phe-83, 129-130 (AE), and Arg-148.

This sequence belongs to the methyltransferase superfamily. RNA methyltransferase RsmG family.

The protein resides in the cytoplasm. Functionally, specifically methylates the N7 position of a guanine in 16S rRNA. In Lachnoclostridium phytofermentans (strain ATCC 700394 / DSM 18823 / ISDg) (Clostridium phytofermentans), this protein is Ribosomal RNA small subunit methyltransferase G.